Here is a 594-residue protein sequence, read N- to C-terminus: Proteasome-associated ATPase (594 aa).

Positions 1 to 10 (MMETPNNDSS) are enriched in polar residues. The tract at residues 1–23 (MMETPNNDSSRTPDEAAGAPDPE) is disordered. A coiled-coil region spans residues 35-86 (ADRQVNILRDKLRHIDRQLAAATQNNSKLVGMLETAKAEILRLKNALDQEGQ). 282–287 (GCGKTL) is an ATP binding site. Residues 593 to 594 (YL) are docks into pockets in the proteasome alpha-ring.

This sequence belongs to the AAA ATPase family. Homohexamer. Assembles into a hexameric ring structure that caps the 20S proteasome core. Strongly interacts with the prokaryotic ubiquitin-like protein Pup through a hydrophobic interface; the interacting region of ARC lies in its N-terminal coiled-coil domain. There is one Pup binding site per ARC hexamer ring. Upon ATP-binding, the C-terminus of ARC interacts with the alpha-rings of the proteasome core, possibly by binding to the intersubunit pockets.

Its pathway is protein degradation; proteasomal Pup-dependent pathway. In terms of biological role, ATPase which is responsible for recognizing, binding, unfolding and translocation of pupylated proteins into the bacterial 20S proteasome core particle. May be essential for opening the gate of the 20S proteasome via an interaction with its C-terminus, thereby allowing substrate entry and access to the site of proteolysis. Thus, the C-termini of the proteasomal ATPase may function like a 'key in a lock' to induce gate opening and therefore regulate proteolysis. The polypeptide is Proteasome-associated ATPase (Arthrobacter sp. (strain FB24)).